Consider the following 407-residue polypeptide: Elongation factor Tu, chloroplastic (407 aa).

The region spanning 10 to 212 (KPHVNIGTIG…SVDNYIPAPE (203 aa)) is the tr-type G domain. Residues 19–26 (GHVDHGKT) form a G1 region. 19-26 (GHVDHGKT) contacts GTP. Mg(2+) is bound at residue threonine 26. Positions 59–63 (GITIN) are G2. Residues 80 to 83 (DCPG) are G3. GTP-binding positions include 80 to 84 (DCPGH) and 135 to 138 (NKAD). Residues 135–138 (NKAD) form a G4 region. The segment at 173–175 (SAL) is G5.

The protein belongs to the TRAFAC class translation factor GTPase superfamily. Classic translation factor GTPase family. EF-Tu/EF-1A subfamily.

The protein localises to the plastid. It localises to the chloroplast. It catalyses the reaction GTP + H2O = GDP + phosphate + H(+). Its function is as follows. GTP hydrolase that promotes the GTP-dependent binding of aminoacyl-tRNA to the A-site of ribosomes during protein biosynthesis. This is Elongation factor Tu, chloroplastic (tufA) from Emiliania huxleyi (Coccolithophore).